Here is a 184-residue protein sequence, read N- to C-terminus: PXMP2/4 family protein 3 (184 aa).

The signal sequence occupies residues 1–44; the sequence is MSNSKPLSLTDAVTTWYMKKLKSKPIQTKALTSATLSFISSVVA. A run of 3 helical transmembrane segments spans residues 58-78, 97-117, and 159-179; these read VVKFTVWGLISSPLVHYWHII, IVDQLVFAPFINIAFYSVLAI, and LRVLFGNLVGFCWGIYLSILA.

It belongs to the peroxisomal membrane protein PXMP2/4 family.

Its subcellular location is the membrane. This Dictyostelium discoideum (Social amoeba) protein is PXMP2/4 family protein 3.